The sequence spans 152 residues: Immunity protein YobK (152 aa).

Interacts with cognate toxin YobL but not with non-cognate putative toxin YeeF. The interaction inhibits the toxic activity of YobL.

The protein localises to the cytoplasm. Immunity component of one of 6 LXG toxin-immunity modules in this strain. They promote kin selection, mediate competition in biofilms, and drive spatial segregation of different strains, indicating that LXG toxins may help avoid warfare between strains in biofilms. Mediates intercellular competition during biofilm formation; disruption of the operon disadvantages the bacteria, but overexpression of the cognate immunity protein restores growth in competition with wild-type. In situ neutralizes the toxic effect of cognate toxin YobL. Neutralizes the toxic activity of cognate toxin YobL upon expression in E.coli. Does not have immunity protein activity on other LXG toxins. This Bacillus subtilis (strain 168) protein is Immunity protein YobK (yobK).